A 313-amino-acid polypeptide reads, in one-letter code: Porphobilinogen deaminase (313 aa).

Residue C242 is modified to S-(dipyrrolylmethanemethyl)cysteine.

It belongs to the HMBS family. As to quaternary structure, monomer. Dipyrromethane is required as a cofactor.

The catalysed reaction is 4 porphobilinogen + H2O = hydroxymethylbilane + 4 NH4(+). It participates in porphyrin-containing compound metabolism; protoporphyrin-IX biosynthesis; coproporphyrinogen-III from 5-aminolevulinate: step 2/4. Functionally, tetrapolymerization of the monopyrrole PBG into the hydroxymethylbilane pre-uroporphyrinogen in several discrete steps. This is Porphobilinogen deaminase from Pseudomonas fluorescens (strain SBW25).